The chain runs to 39 residues: Photosystem II reaction center protein Y (39 aa).

Residues 4–22 form a helical membrane-spanning segment; the sequence is TLVVFAPIIAALAWVIFNI.

It belongs to the PsbY family. As to quaternary structure, PSII is composed of 1 copy each of membrane proteins PsbA, PsbB, PsbC, PsbD, PsbE, PsbF, PsbH, PsbI, PsbJ, PsbK, PsbL, PsbM, PsbT, PsbX, PsbY, Psb30/Ycf12, peripheral proteins PsbO, CyanoQ (PsbQ), PsbU, PsbV and a large number of cofactors. It forms dimeric complexes.

Its subcellular location is the cellular thylakoid membrane. Functionally, loosely associated component of the core of photosystem II (PSII), it is not always seen in crystals. PSII is a light-driven water plastoquinone oxidoreductase, using light energy to abstract electrons from H(2)O, generating a proton gradient subsequently used for ATP formation. The protein is Photosystem II reaction center protein Y of Prochlorococcus marinus (strain MIT 9515).